We begin with the raw amino-acid sequence, 514 residues long: MENLSERFNALQDQLMNIYEAAEQTLQAQIKHWQTLRKEAVLLYYAREKGVTRLGYQPVPVKAVSETKAKEAIAMVLQLESLQTSDFAHEPWTLVDTSTETFRSAPEGHFKKGPVPVEVIYDNDPDNANLYTMWTYVYYMDADDKWHKARSGVNHIGIYYLQGTFKNYYVLFADDAKRYGTTGEWEVKVNKDTVFAPVTSSTPPGSPGRQADTDTTAKTPTTSTTAVDSTSRQLTTSKQPQQTETRGRRYGRRPSSKSRRSQTQQRRSRSRHRSRSRSRSRSKSQTHTTWSTTRSRSTSVGKTRALTSRSRSRGRSPSTCRRGGGRSPRRRSRSPSTYSSCTTQRSQRARAESPTTRGARGSRGSRGGSRGGRLRRRGRSSSSSSPAHKRSRGGSAKLRGVSPGEVGGSLRSVSSKHTGRLGRLLEEARDPPVIIVKGAANTLKYFRNRAKIKYTGLFRSFSTTWSWVAGDGTERLGRPRMLISFSSYSQRRDFDEAVRYPKGVDKAYGNLDSL.

Positions 1-201 (MENLSERFNA…DTVFAPVTSS (201 aa)) are transactivation domain. Residues 196–424 (APVTSSTPPG…SKHTGRLGRL (229 aa)) form a disordered region. Positions 213–231 (TDTTAKTPTTSTTAVDSTS) are enriched in low complexity. A compositionally biased stretch (basic residues) spans 248 to 284 (RRYGRRPSSKSRRSQTQQRRSRSRHRSRSRSRSRSKS). Residues 285–299 (QTHTTWSTTRSRSTS) show a composition bias toward low complexity. A compositionally biased stretch (basic residues) spans 323 to 333 (GGGRSPRRRSR). Residues 334 to 343 (SPSTYSSCTT) are compositionally biased toward low complexity. A DNA-binding domain region spans residues 430–514 (DPPVIIVKGA…DKAYGNLDSL (85 aa)). Residue Lys-437 forms a Glycyl lysine isopeptide (Lys-Gly) (interchain with G-Cter in SUMO) linkage.

Belongs to the papillomaviridae E2 protein family. As to quaternary structure, binds DNA as homodimer. Interacts with protein E1; this interaction greatly increases E1 DNA-binding activity. Interacts with protein L1; this interaction enhances E2-dependent replication and transcription activation. Interacts with protein L2; this interaction inhibits E2 transcriptional activity but not DNA replication function E2. Interacts with protein E7; this interaction inhibits E7 oncogenic activity. Interacts with host TAF1; this interaction modulates E2-dependent transcriptional regulation. Interacts with host BRD4; this interaction mediates E2 transcriptional activation function. Additionally, the interaction with host BRD4 on mitotic chromosomes mediates tethering of the viral genome. Interacts with host TOPBP1; this interaction is required for optimal viral DNA replication. Phosphorylated. In terms of processing, sumoylation plays a regulatory role in E2 transcriptional activity.

Its subcellular location is the host nucleus. Its function is as follows. Plays a role in the initiation of viral DNA replication. A dimer of E2 interacts with a dimer of E1 in order to improve specificity of E1 DNA binding activity. Once the complex recognizes and binds DNA at specific sites, the E2 dimer is removed from DNA. E2 also regulates viral transcription through binding to the E2RE response element (5'-ACCNNNNNNGGT-3') present in multiple copies in the regulatory regions of the viral genome. Activates or represses transcription depending on E2RE's position with regards to proximal promoter elements including the TATA-box. Repression occurs by sterically hindering the assembly of the transcription initiation complex. The sequence is that of Regulatory protein E2 from Human papillomavirus type 5b.